The following is a 54-amino-acid chain: Large ribosomal subunit protein bL33B (54 aa).

The protein belongs to the bacterial ribosomal protein bL33 family.

This chain is Large ribosomal subunit protein bL33B, found in Mycobacterium sp. (strain JLS).